The following is a 335-amino-acid chain: Glucokinase (335 aa).

11–16 (ADIGGT) is a binding site for ATP.

The protein belongs to the bacterial glucokinase family.

Its subcellular location is the cytoplasm. It catalyses the reaction D-glucose + ATP = D-glucose 6-phosphate + ADP + H(+). This is Glucokinase from Xanthomonas oryzae pv. oryzae (strain MAFF 311018).